Here is a 437-residue protein sequence, read N- to C-terminus: Adenylosuccinate synthetase (437 aa).

Residues 12 to 18 (GDEGKGK) and 40 to 42 (GHT) contribute to the GTP site. The active-site Proton acceptor is Asp-13. The Mg(2+) site is built by Asp-13 and Gly-40. IMP-binding positions include 13-16 (DEGK), 38-41 (NAGH), Thr-128, Arg-142, Gln-223, Thr-238, and Arg-302. His-41 acts as the Proton donor in catalysis. Residue 298–304 (TTTGRRR) coordinates substrate. Residues Arg-304, 330 to 332 (KLD), and 412 to 414 (SLG) contribute to the GTP site.

Belongs to the adenylosuccinate synthetase family. As to quaternary structure, homodimer. Mg(2+) serves as cofactor.

Its subcellular location is the cytoplasm. It catalyses the reaction IMP + L-aspartate + GTP = N(6)-(1,2-dicarboxyethyl)-AMP + GDP + phosphate + 2 H(+). Its pathway is purine metabolism; AMP biosynthesis via de novo pathway; AMP from IMP: step 1/2. Functionally, plays an important role in the de novo pathway of purine nucleotide biosynthesis. Catalyzes the first committed step in the biosynthesis of AMP from IMP. The chain is Adenylosuccinate synthetase from Synechococcus sp. (strain CC9311).